The sequence spans 265 residues: Hydroxyethylthiazole kinase (265 aa).

Met-50 contributes to the substrate binding site. Residues Arg-125 and Thr-171 each coordinate ATP. A substrate-binding site is contributed by Gly-198.

It belongs to the Thz kinase family. It depends on Mg(2+) as a cofactor.

The enzyme catalyses 5-(2-hydroxyethyl)-4-methylthiazole + ATP = 4-methyl-5-(2-phosphooxyethyl)-thiazole + ADP + H(+). Its pathway is cofactor biosynthesis; thiamine diphosphate biosynthesis; 4-methyl-5-(2-phosphoethyl)-thiazole from 5-(2-hydroxyethyl)-4-methylthiazole: step 1/1. Catalyzes the phosphorylation of the hydroxyl group of 4-methyl-5-beta-hydroxyethylthiazole (THZ). The chain is Hydroxyethylthiazole kinase from Salmonella paratyphi B (strain ATCC BAA-1250 / SPB7).